The primary structure comprises 155 residues: Trypsin/factor XIIA inhibitor (155 aa).

Positions 1 to 28 (MASSSSSSHRRLILAAAVLLSVLAAASA) are cleaved as a signal peptide. 5 disulfides stabilise this stretch: Cys-34-Cys-83, Cys-48-Cys-72, Cys-57-Cys-114, Cys-73-Cys-132, and Cys-85-Cys-143. Residue Arg-62 is part of the active site. Residues 139–155 (GVAECPWILGGGTMPSK) constitute a propeptide, C-terminal peptide.

Belongs to the protease inhibitor I6 (cereal trypsin/alpha-amylase inhibitor) family. Monomer.

It localises to the secreted. In terms of biological role, potent inhibitor of mammalian trypsin and a specific inhibitor of factor XIIa (activated hageman factor). The sequence is that of Trypsin/factor XIIA inhibitor from Zea mays (Maize).